Here is a 1072-residue protein sequence, read N- to C-terminus: MLGDGKEGTSTIPGFNQIQFEGFYRFIDQGLIEELSKFPKIEDIDHEIEFQLFVETYQLVEPLIKERDAVYESLTYSSELYVSAGLIWKTSRNMQEQRIFIGNIPLMNSLGTSIVNGIYRIVINQILQSPGIYYQSELDHNGISVYTGTIISDWGGRLELEIDKKARIWARVSRKQKISILVLSSAMGSNLREILENVCYPEIFLSFLTDKEKKKIGSKENAILEFYKQFSCVGGDPIFSESLCKELQKKFFHQRCELGRIGRRNINWRLNLNIPQNNIFLLPRDILAAADHLIGMKFGMGTLDDMNHLKNKRIRSVADLLQDQLGLALARLENVVKGTIGGAIRHKLIPTPQNLVTSTPLTTTYESFFGLHPLSQVLDRTNPLTQIVHGRKLSYLGPGGLTGRTANFRIRDIHPSHYGRICPIDTSEGINVGLIGSLSIHARIGDWGSLESPFYELFEKSKKARIRMLFLSPSQDEYYMIAAGNSLALNRGIQEEQAVPARYRQEFLTIAWEEVHLRSILPFQYFSIGASLIPFIEHNDANRALMSSNMQRQAVPLSRSEKCIVGTGLERQVALDSGVPAIAEHEGKILYTDTEKIILSGNGDTFSIPLIMYQRSNKNTCMHQKPQVRRGKYIKKGQILADGAATVGGELSLGKNILVAYMPWEGYNFEDAVLISESLVYDDIYTSFHIRKYEIQTHVTTQGPERITKEIPHLEGRLLRNLDKNGIVMLGSWVETGDILVGKLTPQVAKESSYAPEDRLLRAILGIQVSTSKETCLKLPIGGRGRVIDVRWVQKKGGSSYNPEKIRVYISQKREIKVGDKVAGRHGNKGIISKILPRQDMPYLQDGRPVDMVFNPLGVPSRMNVGQIFECSLGLAGSLLDRHYRIAPFDERYEQEASRKLVFSELYQASKQTANPWVFEPEYPGKSRIFDGRTGDPFEQPVIIGKPYILKLIHQVDDKIHGRSSGHYALVTQQPLRGRSKQGGQRVGEMEVWALEGFGVAHILQEMLTYKSDHIRARQEVLATTIIGGTIPKPEDAPESFRLLVRELRSLALELNHFLVSEKNFQINRKAV.

This sequence belongs to the RNA polymerase beta chain family. In terms of assembly, in plastids the minimal PEP RNA polymerase catalytic core is composed of four subunits: alpha, beta, beta', and beta''. When a (nuclear-encoded) sigma factor is associated with the core the holoenzyme is formed, which can initiate transcription.

The protein localises to the plastid. It is found in the chloroplast. The catalysed reaction is RNA(n) + a ribonucleoside 5'-triphosphate = RNA(n+1) + diphosphate. DNA-dependent RNA polymerase catalyzes the transcription of DNA into RNA using the four ribonucleoside triphosphates as substrates. This is DNA-directed RNA polymerase subunit beta from Lobularia maritima (Sweet alyssum).